A 427-amino-acid chain; its full sequence is Glutamate-1-semialdehyde 2,1-aminomutase (427 aa).

At lysine 268 the chain carries N6-(pyridoxal phosphate)lysine.

It belongs to the class-III pyridoxal-phosphate-dependent aminotransferase family. HemL subfamily. Pyridoxal 5'-phosphate serves as cofactor.

The protein resides in the cytoplasm. It carries out the reaction (S)-4-amino-5-oxopentanoate = 5-aminolevulinate. Its pathway is porphyrin-containing compound metabolism; protoporphyrin-IX biosynthesis; 5-aminolevulinate from L-glutamyl-tRNA(Glu): step 2/2. This is Glutamate-1-semialdehyde 2,1-aminomutase from Methanococcus maripaludis (strain C5 / ATCC BAA-1333).